Consider the following 397-residue polypeptide: Acetate kinase (397 aa).

Residue N8 coordinates Mg(2+). ATP is bound at residue K15. R89 contacts substrate. D146 (proton donor/acceptor) is an active-site residue. ATP-binding positions include 206 to 210 (HIGNG), 281 to 283 (DLR), and 328 to 332 (GVGEN). E381 contributes to the Mg(2+) binding site.

This sequence belongs to the acetokinase family. Homodimer. Mg(2+) serves as cofactor. It depends on Mn(2+) as a cofactor.

Its subcellular location is the cytoplasm. The catalysed reaction is acetate + ATP = acetyl phosphate + ADP. Its pathway is metabolic intermediate biosynthesis; acetyl-CoA biosynthesis; acetyl-CoA from acetate: step 1/2. In terms of biological role, catalyzes the formation of acetyl phosphate from acetate and ATP. Can also catalyze the reverse reaction. In Oceanobacillus iheyensis (strain DSM 14371 / CIP 107618 / JCM 11309 / KCTC 3954 / HTE831), this protein is Acetate kinase.